Reading from the N-terminus, the 33-residue chain is U1-pseudomyrmecitoxin-Pt1 subunit LS2 (33 aa).

The protein belongs to the myrmexin family. As to quaternary structure, heterodimer composed of subunit LS2 and subunit SS1, heterodimer composed of subunit LS2 and SS2, and heterodimer composed of subunit LS2 and SS3; disulfide-linked. In terms of tissue distribution, expressed by the venom gland.

The protein localises to the secreted. Functionally, this heterodimer may have anti-inflammatory properties, since the myrmexin complex (composed of 6 SS-LS heterodimers) inhibits carrageenin-induced edema in a dose-dependent manner (after subcutaneous injection into rats). In Pseudomyrmex triplarinus (Ant), this protein is U1-pseudomyrmecitoxin-Pt1 subunit LS2.